The sequence spans 806 residues: Transitional endoplasmic reticulum ATPase (806 aa).

Position 2 is an N-acetylalanine (Ala-2). Phosphoserine is present on residues Ser-3 and Ser-7. Lys-8 participates in a covalent cross-link: Glycyl lysine isopeptide (Lys-Gly) (interchain with G-Cter in SUMO2). At Ser-13 the chain carries Phosphoserine. Lys-18 is covalently cross-linked (Glycyl lysine isopeptide (Lys-Gly) (interchain with G-Cter in SUMO2)). Ser-37 carries the phosphoserine modification. 247 to 253 is a binding site for ATP; the sequence is PGTGKTL. Residue Lys-315 is modified to N6,N6,N6-trimethyllysine; by VCPKMT. The ATP site is built by Asn-348 and His-384. At Thr-436 the chain carries Phosphothreonine. Ser-462 is subject to Phosphoserine. N6-acetyllysine is present on residues Lys-502 and Lys-505. 521 to 526 provides a ligand contact to ATP; the sequence is GCGKTL. The residue at position 668 (Lys-668) is an N6-acetyllysine; alternate. Lys-668 is subject to N6-succinyllysine; alternate. Residue Ser-702 is modified to Phosphoserine. The disordered stretch occupies residues 708–727; sequence RRERERQTNPSAMEVEEDDP. Lys-754 carries the post-translational modification N6-acetyllysine. Residues 768-806 form a disordered region; sequence FGSFRFPSGNQGGAGPSQGSGGGTGGNVYTEDNDDDLYG. Phosphoserine occurs at positions 770, 775, and 787. Residues 777-793 show a composition bias toward gly residues; sequence NQGGAGPSQGSGGGTGG. Residues 797-806 are interaction with UBXN6; sequence TEDNDDDLYG. The short motif at 802–806 is the PIM motif element; sequence DDLYG. Residue Tyr-805 is modified to Phosphotyrosine.

Belongs to the AAA ATPase family. In terms of assembly, homohexamer. Forms a ring-shaped particle of 12.5 nm diameter, that displays 6-fold radial symmetry. Interacts with NSFL1C-like protein p37; the complex has membrane fusion activity and is required for Golgi and endoplasmic reticulum biogenesis. Interacts with RHBDD1 (via C-terminal domain). Interacts with SELENOS and SYVN1, as well as with DERL1 (via SHP-box motif), DERL2 and DERL3; which probably transfer misfolded proteins from the ER to VCP. Interacts with SVIP and DERL1. Component of a complex required to couple retrotranslocation, ubiquitination and deglycosylation composed of NGLY1, SAKS1, AMFR, VCP and RAD23B. Part of a complex composed of STUB1/CHIP, VCP/p97, CHRNA3, and UBXN2A that modulates the ubiquitination and endoplasmic reticulum-associated degradation (ERAD) of CHRNA3. Within the complex UBXN2A acts as a scaffold protein required for the interaction of CHRNA3 with VCP/p97, this interaction also inhibits CHRNA3 ubiquitination by STUB1/CHIP and subsequently ERAD. Interacts with UBXN2A (via UBX domain); the interaction is required for the interaction of CHRNA3 in the STUB1-VCP-UBXN2A complex. Directly interacts with UBXN4 and RNF19A. Interacts with CASR. Interacts with UBE4B and YOD1. Interacts with clathrin. Interacts with RNF103. Interacts with TRIM13 and TRIM21. Component of a VCP/p97-AMFR/gp78 complex that participates in the final step of the endoplasmic reticulum-associated degradation (ERAD) of HMGCR. Interacts directly with AMFR/gp78 (via its VIM). Interacts with SPRTN; leading to recruitment to stalled replication forks. Part of a ternary complex containing STX5A, NSFL1C and VCP. NSFL1C forms a homotrimer that binds to one end of a VCP homohexamer. The complex binds to membranes enriched in phosphatidylethanolamine-containing lipids and promotes Golgi membrane fusion. Binds to a heterodimer of NPLOC4 and UFD1, binding to this heterodimer inhibits Golgi-membrane fusion. Interaction with VCIP135 leads to dissociation of the complex via ATP hydrolysis by VCP. Part of a ternary complex containing NPLOC4, UFD1 and VCP. Interacts with WASHC5. Interacts with UBOX5. Interacts (via N-terminus) with UBXN7, UBXN8, and probably several other UBX domain-containing proteins (via UBX domains); the interactions are mutually exclusive with VIM-dependent interactions such as those with AMFR and SELENOS. Forms a complex with UBQLN1 and UBXN4. Interacts (via the PIM motif) with RNF31 (via the PUB domain). Interacts with RIGI and RNF125; interaction takes place when RIGI is ubiquitinated via 'Lys-63'-linked ubiquitin on its CARD domains, leading to recruit RNF125 and promote ubiquitination and degradation of RIGI. Interacts with BAG6. Interacts with UBXN10. Interacts with UBXN6; the interaction with UBXN6 is direct and competitive with UFD1. Forms a ternary complex with CAV1 and UBXN6. Interacts with PLAA, UBXN6 and YOD1; may form a complex involved in macroautophagy. Interacts with ANKZF1. Interacts with ubiquitin-binding protein FAF1. Interacts with ZFAND2B (via VIM motif); the interaction is direct. Interacts with ZFAND1 (via its ubiquitin-like region); this interaction occurs in an arsenite-dependent manner. Interacts with CCDC47. Interacts with LMBR1L and UBAC2. Interacts with ATXN3. Interacts with TEX264; bridging VCP to covalent DNA-protein cross-links (DPCs). In terms of processing, phosphorylated by tyrosine kinases in response to T-cell antigen receptor activation. Phosphorylated in mitotic cells. ISGylated. Post-translationally, methylation at Lys-315 catalyzed by VCPKMT is increased in the presence of ASPSCR1. Lys-315 methylation may decrease ATPase activity.

It is found in the cytoplasm. Its subcellular location is the cytosol. The protein resides in the endoplasmic reticulum. The protein localises to the nucleus. It localises to the stress granule. It carries out the reaction ATP + H2O = ADP + phosphate + H(+). In terms of biological role, necessary for the fragmentation of Golgi stacks during mitosis and for their reassembly after mitosis. Involved in the formation of the transitional endoplasmic reticulum (tER). The transfer of membranes from the endoplasmic reticulum to the Golgi apparatus occurs via 50-70 nm transition vesicles which derive from part-rough, part-smooth transitional elements of the endoplasmic reticulum (tER). Vesicle budding from the tER is an ATP-dependent process. The ternary complex containing UFD1, VCP and NPLOC4 binds ubiquitinated proteins and is necessary for the export of misfolded proteins from the ER to the cytoplasm, where they are degraded by the proteasome. The NPLOC4-UFD1-VCP complex regulates spindle disassembly at the end of mitosis and is necessary for the formation of a closed nuclear envelope. Regulates E3 ubiquitin-protein ligase activity of RNF19A. Component of the VCP/p97-AMFR/gp78 complex that participates in the final step of the sterol-mediated ubiquitination and endoplasmic reticulum-associated degradation (ERAD) of HMGCR. Mediates the endoplasmic reticulum-associated degradation of CHRNA3 in cortical neurons as part of the STUB1-VCP-UBXN2A complex. Involved in endoplasmic reticulum stress-induced pre-emptive quality control, a mechanism that selectively attenuates the translocation of newly synthesized proteins into the endoplasmic reticulum and reroutes them to the cytosol for proteasomal degradation. Involved in clearance process by mediating G3BP1 extraction from stress granules. Also involved in DNA damage response: recruited to double-strand breaks (DSBs) sites in a RNF8- and RNF168-dependent manner and promotes the recruitment of TP53BP1 at DNA damage sites. Recruited to stalled replication forks by SPRTN: may act by mediating extraction of DNA polymerase eta (POLH) to prevent excessive translesion DNA synthesis and limit the incidence of mutations induced by DNA damage. Together with SPRTN metalloprotease, involved in the repair of covalent DNA-protein cross-links (DPCs) during DNA synthesis. Involved in interstrand cross-link repair in response to replication stress by mediating unloading of the ubiquitinated CMG helicase complex. Mediates extraction of PARP1 trapped to chromatin: recognizes and binds ubiquitinated PARP1 and promotes its removal. Required for cytoplasmic retrotranslocation of stressed/damaged mitochondrial outer-membrane proteins and their subsequent proteasomal degradation. Essential for the maturation of ubiquitin-containing autophagosomes and the clearance of ubiquitinated protein by autophagy. Acts as a negative regulator of type I interferon production by interacting with RIGI: interaction takes place when RIGI is ubiquitinated via 'Lys-63'-linked ubiquitin on its CARD domains, leading to recruit RNF125 and promote ubiquitination and degradation of RIGI. May play a role in the ubiquitin-dependent sorting of membrane proteins to lysosomes where they undergo degradation. May more particularly play a role in caveolins sorting in cells. By controlling the steady-state expression of the IGF1R receptor, indirectly regulates the insulin-like growth factor receptor signaling pathway. In Rattus norvegicus (Rat), this protein is Transitional endoplasmic reticulum ATPase (Vcp).